We begin with the raw amino-acid sequence, 243 residues long: Ras-related protein Rab-12 (243 aa).

The residue at position 1 (M1) is an N-acetylmethionine. The disordered stretch occupies residues 1–36 (MDPSAALHRRPAGGSLGAVSPALSGGQARRRKQPPR). Residues S15, S20, and S24 each carry the phosphoserine modification. The GTP site is built by G51, V52, G53, K54, T55, S72, and T73. Mg(2+) is bound at residue T55. Short sequence motifs (switch) lie at residues 64–78 (DTFC…GVDF) and 96–113 (DTAG…YYRS). Positions 73 and 96 each coordinate Mg(2+). A GTP-binding site is contributed by G99. A Phosphoserine; by LRRK2 modification is found at S105. GTP contacts are provided by N154, K155, D157, S185, A186, and K187. Residues C242 and C243 are each lipidated (S-geranylgeranyl cysteine).

This sequence belongs to the small GTPase superfamily. Rab family. In terms of assembly, interacts with RABIF and OPTN. Interacts with LRRK2; interaction facilitates phosphorylation of Ser-105. Interacts with GDI1, GDI2, CHM and CHML; these interactions are disrupted by phosphorylation on Ser-105. Interacts with RILPL1 and RILPL2; these interactions are dependent on phosphorylation of Ser-105. It depends on Mg(2+) as a cofactor. Phosphorylation of Ser-105 in the switch II region by LRRK2 prevents the association of RAB regulatory proteins, including CHM, CHML and RAB GDP dissociation inhibitors GDI1 and GDI2. In terms of tissue distribution, ubiquitously expressed.

The protein localises to the recycling endosome membrane. Its subcellular location is the lysosome membrane. It localises to the golgi apparatus membrane. The protein resides in the cytoplasmic vesicle. It is found in the autophagosome. The catalysed reaction is GTP + H2O = GDP + phosphate + H(+). Regulated by guanine nucleotide exchange factors (GEFs) including DENND3 which promote the exchange of bound GDP for free GTP. Regulated by GTPase activating proteins (GAPs) which increase the GTP hydrolysis activity. Inhibited by GDP dissociation inhibitors (GDIs). In terms of biological role, the small GTPases Rab are key regulators of intracellular membrane trafficking, from the formation of transport vesicles to their fusion with membranes. Rabs cycle between an inactive GDP-bound form and an active GTP-bound form that is able to recruit to membranes different set of downstream effectors directly responsible for vesicle formation, movement, tethering and fusion. RAB12 may play a role in protein transport from recycling endosomes to lysosomes regulating, for instance, the degradation of the transferrin receptor. Involved in autophagy. In Mus musculus (Mouse), this protein is Ras-related protein Rab-12.